The following is a 76-amino-acid chain: Exodeoxyribonuclease 7 small subunit (76 aa).

It belongs to the XseB family. In terms of assembly, heterooligomer composed of large and small subunits.

The protein localises to the cytoplasm. The catalysed reaction is Exonucleolytic cleavage in either 5'- to 3'- or 3'- to 5'-direction to yield nucleoside 5'-phosphates.. In terms of biological role, bidirectionally degrades single-stranded DNA into large acid-insoluble oligonucleotides, which are then degraded further into small acid-soluble oligonucleotides. In Bacillus cereus (strain ATCC 14579 / DSM 31 / CCUG 7414 / JCM 2152 / NBRC 15305 / NCIMB 9373 / NCTC 2599 / NRRL B-3711), this protein is Exodeoxyribonuclease 7 small subunit.